The primary structure comprises 456 residues: Nitrogenase molybdenum-iron protein beta chain (456 aa).

Residues cysteine 23, cysteine 48, cysteine 106, and serine 141 each coordinate [8Fe-7S] cluster.

This sequence belongs to the NifD/NifK/NifE/NifN family. As to quaternary structure, tetramer of two alpha and two beta chains. Forms complex with the iron protein (nitrogenase component 2). [8Fe-7S] cluster is required as a cofactor.

The enzyme catalyses N2 + 8 reduced [2Fe-2S]-[ferredoxin] + 16 ATP + 16 H2O = H2 + 8 oxidized [2Fe-2S]-[ferredoxin] + 2 NH4(+) + 16 ADP + 16 phosphate + 6 H(+). Functionally, this molybdenum-iron protein is part of the nitrogenase complex that catalyzes the key enzymatic reactions in nitrogen fixation. This chain is Nitrogenase molybdenum-iron protein beta chain (nifK2), found in Methanosarcina barkeri.